We begin with the raw amino-acid sequence, 181 residues long: Ribosome maturation factor RimM (181 aa).

The PRC barrel domain occupies 99-172; that stretch reads EDEFYQVDLI…FLIVDPMAAG (74 aa).

Belongs to the RimM family. Binds ribosomal protein uS19.

Its subcellular location is the cytoplasm. Functionally, an accessory protein needed during the final step in the assembly of 30S ribosomal subunit, possibly for assembly of the head region. Essential for efficient processing of 16S rRNA. May be needed both before and after RbfA during the maturation of 16S rRNA. It has affinity for free ribosomal 30S subunits but not for 70S ribosomes. This is Ribosome maturation factor RimM from Bartonella tribocorum (strain CIP 105476 / IBS 506).